A 146-amino-acid polypeptide reads, in one-letter code: Large ribosomal subunit protein bL21 (146 aa).

Positions 117 to 146 are disordered; that stretch reads ITIGKSAPKSSSKKETVKKETKPKSEKSTN. Basic and acidic residues predominate over residues 128–146; that stretch reads SKKETVKKETKPKSEKSTN.

Belongs to the bacterial ribosomal protein bL21 family. In terms of assembly, part of the 50S ribosomal subunit. Contacts protein L20.

Its function is as follows. This protein binds to 23S rRNA in the presence of protein L20. This chain is Large ribosomal subunit protein bL21, found in Prochlorococcus marinus (strain MIT 9301).